The primary structure comprises 226 residues: Probable functional amyloid protease FapD (226 aa).

Residues 1 to 18 (MRTLILSLLLLVDLTTQA) form the signal peptide. A Peptidase C39 domain is found at 50-180 (QKTDFSCGAA…KGWNGIVFAV (131 aa)). Cys-56 is a catalytic residue.

The protein belongs to the FapD family.

The protein resides in the periplasm. Functionally, probable protease that might be involved in processing fibril precursors. Upon overexpression of the endogenous six-gene locus (fapA-fapF), cells form large clumps during liquid growth, make large amounts of biofilm and produce amyloid fibrils. This chain is Probable functional amyloid protease FapD, found in Pseudomonas aeruginosa (strain ATCC 15692 / DSM 22644 / CIP 104116 / JCM 14847 / LMG 12228 / 1C / PRS 101 / PAO1).